Reading from the N-terminus, the 307-residue chain is Acetaldehyde dehydrogenase 2 (307 aa).

C131 acts as the Acyl-thioester intermediate in catalysis. NAD(+) is bound by residues 162–170 and N273; that span reads SVGPGTRKN.

Belongs to the acetaldehyde dehydrogenase family.

The enzyme catalyses acetaldehyde + NAD(+) + CoA = acetyl-CoA + NADH + H(+). This is Acetaldehyde dehydrogenase 2 (aphF) from Comamonas testosteroni (Pseudomonas testosteroni).